A 478-amino-acid chain; its full sequence is Nuclear distribution protein PAC1 (478 aa).

The region spanning 9 to 41 is the LisH domain; the sequence is QAEELHKAMIAYLLSANLPKSAAALREELADSV. Residues 60–87 adopt a coiled-coil conformation; that stretch reads TSVVRLQKKIMDLESRNNALQSELDSAT. WD repeat units lie at residues 113 to 154, 156 to 196, 200 to 247, 250 to 289, 292 to 352, 354 to 393, 398 to 439, and 440 to 477; these read SHRE…RTIK, HTKA…KNIR, GHDH…CVKT, GHVD…TKST, GHEH…IKTL, GHDN…KCVR, AHGH…GASA, and INGV…RVFA.

This sequence belongs to the WD repeat LIS1/nudF family. In terms of assembly, self-associates. Interacts with NDL1 and dynein.

The protein localises to the cytoplasm. It localises to the cytoskeleton. The protein resides in the spindle pole. Its function is as follows. Positively regulates the activity of the minus-end directed microtubule motor protein dynein. May enhance dynein-mediated microtubule sliding by targeting dynein to the microtubule plus end. Required for nuclear migration during vegetative growth as well as development. Required for retrograde early endosome (EE) transport from the hyphal tip. Required for localization of dynein to the mitotic spindle poles. Recruits additional proteins to the dynein complex at SPBs. This is Nuclear distribution protein PAC1 from Paracoccidioides brasiliensis (strain Pb03).